The primary structure comprises 122 residues: Protein SPIRAL1-like 3 (122 aa).

Disordered stretches follow at residues 1–78 (MGKA…NNYF) and 96–122 (KVHAAPGGGSSLDYLFGGPSPAGSGNK). A compositionally biased stretch (low complexity) spans 32–61 (TMGTTTTTTTTTTTDGTGGRPITTTTTTVT). Serine 73 is modified (phosphoserine).

This sequence belongs to the SPIRAL1 family. As to expression, ubiquitous. Preferentially expressed in above-ground organs.

Acts redundantly with SPR1 in maintaining the cortical microtubules organization essential for anisotropic cell growth. The protein is Protein SPIRAL1-like 3 (SP1L3) of Arabidopsis thaliana (Mouse-ear cress).